The sequence spans 298 residues: Tyrosine recombinase XerC (298 aa).

Residues 2–88 form the Core-binding (CB) domain; the sequence is TDLHTDVERY…ALRSFFDWLV (87 aa). The Tyr recombinase domain occupies 109 to 288; it reads HLPKNIDVDD…DFQHLASVYD (180 aa). Residues arginine 148, lysine 172, histidine 240, arginine 243, and histidine 266 contribute to the active site. The active-site O-(3'-phospho-DNA)-tyrosine intermediate is tyrosine 275.

It belongs to the 'phage' integrase family. XerC subfamily. Forms a cyclic heterotetrameric complex composed of two molecules of XerC and two molecules of XerD, in which XerC interacts with XerD via its C-terminal region, XerD interacts with XerC via its C-terminal region and so on.

The protein resides in the cytoplasm. Its activity is regulated as follows. FtsK may regulate the catalytic switch between XerC and XerD in the heterotetrameric complex during the two steps of the recombination process. Functionally, site-specific tyrosine recombinase, which acts by catalyzing the cutting and rejoining of the recombining DNA molecules. Binds cooperatively to specific DNA consensus sequences that are separated from XerD binding sites by a short central region, forming the heterotetrameric XerC-XerD complex that recombines DNA substrates. The complex is essential to convert dimers of the bacterial chromosome into monomers to permit their segregation at cell division. It also contributes to the segregational stability of plasmids. In the complex XerC specifically exchanges the top DNA strands. The chain is Tyrosine recombinase XerC from Shigella flexneri serotype 5b (strain 8401).